The primary structure comprises 362 residues: Sterol-4-alpha-carboxylate 3-dehydrogenase, decarboxylating (362 aa).

Met1 carries the N-acetylmethionine modification. The active-site Proton acceptor is Tyr161. Lys165 contributes to the NAD(+) binding site. Residues 287-307 (WMAYYLAFLLSLLVMVVSPLI) form a helical membrane-spanning segment. Positions 359 to 362 (RKDK) match the Prevents secretion from ER motif.

This sequence belongs to the 3-beta-HSD family. In terms of assembly, homodimer.

It is found in the endoplasmic reticulum membrane. Its subcellular location is the lipid droplet. It carries out the reaction a 3beta-hydroxysteroid-4alpha-carboxylate + NADP(+) = a 3-oxosteroid + CO2 + NADPH. It catalyses the reaction a 3beta-hydroxysteroid-4alpha-carboxylate + NAD(+) = a 3-oxosteroid + CO2 + NADH. The enzyme catalyses 4alpha-carboxyzymosterol + NADP(+) = zymosterone + CO2 + NADPH. The catalysed reaction is 4alpha-carboxy-4beta-methyl-5alpha-cholest-8-en-3beta-ol + NADP(+) = 4alpha-methyl-5alpha-cholest-8-en-3-one + CO2 + NADPH. It carries out the reaction 4alpha-carboxy-5alpha-cholest-8-ene-3beta-ol + NADP(+) = 5alpha-cholest-8-en-3-one + CO2 + NADPH. It catalyses the reaction 4beta-methylzymosterol-4alpha-carboxylate + NADP(+) = 3-dehydro-4-methylzymosterol + CO2 + NADPH. The enzyme catalyses 4beta-methylzymosterol-4alpha-carboxylate + NAD(+) = 3-dehydro-4-methylzymosterol + CO2 + NADH. The catalysed reaction is 4alpha-carboxy-5alpha-cholest-8-ene-3beta-ol + NAD(+) = 5alpha-cholest-8-en-3-one + CO2 + NADH. It carries out the reaction 4alpha-carboxy-4beta-methyl-5alpha-cholest-8-en-3beta-ol + NAD(+) = 4alpha-methyl-5alpha-cholest-8-en-3-one + CO2 + NADH. It catalyses the reaction 4alpha-carboxyzymosterol + NAD(+) = zymosterone + CO2 + NADH. The protein operates within steroid biosynthesis; zymosterol biosynthesis; zymosterol from lanosterol: step 4/6. Functionally, catalyzes the NAD(P)(+)-dependent oxidative decarboxylation of the C4 methyl groups of 4-alpha-carboxysterols in post-squalene cholesterol biosynthesis. Plays a role in the regulation of the endocytic trafficking of EGFR. This chain is Sterol-4-alpha-carboxylate 3-dehydrogenase, decarboxylating (Nsdhl), found in Mus musculus (Mouse).